Here is a 370-residue protein sequence, read N- to C-terminus: Asporin (370 aa).

Residues 1–15 form the signal peptide; sequence MKVYVLLVFLTLCSA. Serine 45 is a glycosylation site (O-linked (GalNAc...) serine). The 37-residue stretch at 56–92 folds into the LRRNT domain; the sequence is FFPFDLFSTCPFGCQCYSRVVHCSDLGLSSVPSNIPF. 2 disulfides stabilise this stretch: cysteine 65-cysteine 71 and cysteine 69-cysteine 78. LRR repeat units lie at residues 93–114, 117–138, 141–163, 164–183, 186–209, 232–253, 256–277, 280–302, 303–324, 332–354, and 355–370; these read DTRMVDLQNNKIKEIKENDFKG, SLYALILNNNKLTKIHPKAFLT, KLRRLYLSHNQLSEIPLNLPKSL, AELRIHDNKVKKIQKATFKG, ALHVLEMSANPLDNNGIEPGAFEG, TLLELHLDYNKISVVELEDFKR, DLQRLGLGNNRITDIENGSLAN, RVREIHLENNKLKKVPSGLQELK, YLQIIFLHSNSITKVGVNDFCP, SLYSAISLSNNPVKYWEVQPATF, and RCVLSRMSVQLGNFRK. Asparagine 272 carries N-linked (GlcNAc...) asparagine glycosylation. A disulfide bridge connects residues cysteine 323 and cysteine 356.

The protein belongs to the small leucine-rich proteoglycan (SLRP) family. SLRP class I subfamily.

The protein resides in the secreted. The protein localises to the extracellular space. It is found in the extracellular matrix. The polypeptide is Asporin (ASPN) (Bos taurus (Bovine)).